The following is a 571-amino-acid chain: Proline--tRNA ligase (571 aa).

This sequence belongs to the class-II aminoacyl-tRNA synthetase family. ProS type 1 subfamily. As to quaternary structure, homodimer.

The protein localises to the cytoplasm. The enzyme catalyses tRNA(Pro) + L-proline + ATP = L-prolyl-tRNA(Pro) + AMP + diphosphate. Its function is as follows. Catalyzes the attachment of proline to tRNA(Pro) in a two-step reaction: proline is first activated by ATP to form Pro-AMP and then transferred to the acceptor end of tRNA(Pro). As ProRS can inadvertently accommodate and process non-cognate amino acids such as alanine and cysteine, to avoid such errors it has two additional distinct editing activities against alanine. One activity is designated as 'pretransfer' editing and involves the tRNA(Pro)-independent hydrolysis of activated Ala-AMP. The other activity is designated 'posttransfer' editing and involves deacylation of mischarged Ala-tRNA(Pro). The misacylated Cys-tRNA(Pro) is not edited by ProRS. This chain is Proline--tRNA ligase, found in Vibrio atlanticus (strain LGP32) (Vibrio splendidus (strain Mel32)).